Reading from the N-terminus, the 405-residue chain is Tyrosine--tRNA ligase (405 aa).

Y35 contributes to the L-tyrosine binding site. Positions 40–49 (ATSSSLHIGH) match the 'HIGH' region motif. Positions 166 and 170 each coordinate L-tyrosine. The short motif at 226–230 (KMGKS) is the 'KMSKS' region element. K229 lines the ATP pocket. An S4 RNA-binding domain is found at 340–404 (VLLINLMLDS…VGKKKFLRIV (65 aa)).

This sequence belongs to the class-I aminoacyl-tRNA synthetase family. TyrS type 1 subfamily. Homodimer.

The protein resides in the cytoplasm. It carries out the reaction tRNA(Tyr) + L-tyrosine + ATP = L-tyrosyl-tRNA(Tyr) + AMP + diphosphate + H(+). Functionally, catalyzes the attachment of tyrosine to tRNA(Tyr) in a two-step reaction: tyrosine is first activated by ATP to form Tyr-AMP and then transferred to the acceptor end of tRNA(Tyr). The polypeptide is Tyrosine--tRNA ligase (Borreliella afzelii (strain PKo) (Borrelia afzelii)).